We begin with the raw amino-acid sequence, 2135 residues long: Protein SUBSTANDARD STARCH GRAIN 4, chloroplastic (2135 aa).

Composition is skewed to low complexity over residues 1-10 (MSHCLRASPF) and 72-84 (QHQP…RQQQ). The N-terminal 42 residues, 1-42 (MSHCLRASPFLSPPPPLLHPSRRRRHRQGGCIHTSPGTRPLV), are a transit peptide targeting the chloroplast. Disordered stretches follow at residues 1-44 (MSHC…LVAR) and 58-89 (SDSS…PPPP). At 43–104 (ARARFDPPPL…ASLAPLWREG (62 aa)) the chain is on the stromal side. The chain crosses the membrane as a helical span at residues 105 to 125 (LFLVRCSVFAAALSVAAALSW). The Chloroplast intermembrane portion of the chain corresponds to 126 to 2135 (YAQLRARSFV…LFEYSATSQG (2010 aa)). A compositionally biased stretch (basic residues) spans 361-370 (RRRYRRKAHS). Disordered stretches follow at residues 361–382 (RRRY…SSQQ), 401–492 (SGNP…QVSE), and 1843–1869 (FLGS…SFKP). 3 stretches are compositionally biased toward polar residues: residues 373–382 (ISDTDNSSQQ), 454–490 (NFAS…NEQV), and 1846–1856 (SLSTSPDGQQS). Basic and acidic residues predominate over residues 1857-1866 (ETERTPEHGS).

Belongs to the TamB family. In terms of assembly, part of the TIC complex, which can interact with components of the TOC complex to form a larger import complex. Highly expressed in third leaf and developing seeds. Expressed in anthers, pistils, flag leaves and young panicles.

It localises to the plastid. It is found in the chloroplast inner membrane. The protein localises to the chloroplast intermembrane space. Its subcellular location is the chloroplast. The protein resides in the amyloplast. In terms of biological role, part of the inner chloroplast membrane translocon complex (TIC) which associates with the outer chloroplast membrane translocon complex (TOC) and forms a supercomplex involved in protein precursor import into the chloroplast stroma. Required for the regulation of starch granule size in amyloplasts. The sequence is that of Protein SUBSTANDARD STARCH GRAIN 4, chloroplastic from Oryza sativa subsp. japonica (Rice).